We begin with the raw amino-acid sequence, 386 residues long: Short integuments 2, mitochondrial (386 aa).

One can recognise a CP-type G domain in the interval 37–207 (TRAIRNRLKL…VLDSPGVLVP (171 aa)). A DARXP motif motif is present at residues 55 to 59 (DARIP). The interval 81–84 (NKKD) is G4. Residues 81 to 84 (NKKD), 109 to 110 (NA), and 146 to 151 (NVGKSA) contribute to the GTP site. The interval 109–111 (NAH) is G5. The interval 143 to 150 (GVPNVGKS) is G1. A G2 region spans residues 180–184 (GVTQD). The segment at 200 to 203 (DSPG) is G3. Gly-203 contributes to the GTP binding site.

It belongs to the TRAFAC class YlqF/YawG GTPase family. MTG1 subfamily. As to expression, expressed in seedlings, roots, leaves, stems, inflorescences and siliques.

It localises to the mitochondrion. Its function is as follows. GTPase that may function in mitochondrial ribosome assembly. Involved in a variety of growth processes during vegetative development and promotes growth and cell division in the developing integuments. The protein is Short integuments 2, mitochondrial of Arabidopsis thaliana (Mouse-ear cress).